Reading from the N-terminus, the 262-residue chain is Acyl-[acyl-carrier-protein]--UDP-N-acetylglucosamine O-acyltransferase (262 aa).

It belongs to the transferase hexapeptide repeat family. LpxA subfamily. Homotrimer.

Its subcellular location is the cytoplasm. The catalysed reaction is a (3R)-hydroxyacyl-[ACP] + UDP-N-acetyl-alpha-D-glucosamine = a UDP-3-O-[(3R)-3-hydroxyacyl]-N-acetyl-alpha-D-glucosamine + holo-[ACP]. It functions in the pathway glycolipid biosynthesis; lipid IV(A) biosynthesis; lipid IV(A) from (3R)-3-hydroxytetradecanoyl-[acyl-carrier-protein] and UDP-N-acetyl-alpha-D-glucosamine: step 1/6. Functionally, involved in the biosynthesis of lipid A, a phosphorylated glycolipid that anchors the lipopolysaccharide to the outer membrane of the cell. The sequence is that of Acyl-[acyl-carrier-protein]--UDP-N-acetylglucosamine O-acyltransferase from Aliivibrio fischeri (strain ATCC 700601 / ES114) (Vibrio fischeri).